Reading from the N-terminus, the 233-residue chain is PILAAVLQQSSGNVDFDSESPRKPEIQNEIVDLHNSLRRSVNPTASNMLRMEWYPEAADNAERWAYRCIESHSSYESRVIEGIKCGENIYMSPYPMKWTDIIHAWHDEYKDFKYGVGADPPNAVTGHYTQIVWYKSYRIGCAAAYCPSSPYSYFFVCQYCPAGNFIGKTATPYTSGTPCGDCPSDCDNGLCTNPCTRENKFTNCNTMVQQSSCQDNYMKTNCPASCFCQNKII.

The first 12 residues, 1-12 (PILAAVLQQSSG), serve as a signal peptide directing secretion. An SCP domain is found at 31-159 (VDLHNSLRRS…PYSYFFVCQY (129 aa)). 8 cysteine pairs are disulfide-bonded: cysteine 68–cysteine 146, cysteine 85–cysteine 160, cysteine 141–cysteine 157, cysteine 179–cysteine 186, cysteine 182–cysteine 191, cysteine 195–cysteine 228, cysteine 204–cysteine 222, and cysteine 213–cysteine 226. One can recognise a ShKT domain in the interval 195–228 (CTRENKFTNCNTMVQQSSCQDNYMKTNCPASCFC).

Belongs to the CRISP family. As to expression, expressed by the venom gland.

It is found in the secreted. Its function is as follows. Blocks contraction of smooth muscle elicited by high potassium-induced depolarization, but does not block caffeine-stimulated contraction. May target voltage-gated calcium channels on smooth muscle. The chain is Cysteine-rich venom protein from Trimeresurus stejnegeri (Chinese green tree viper).